We begin with the raw amino-acid sequence, 442 residues long: ATP-dependent protease ATPase subunit HslU (442 aa).

Residues Ile-18 and 60–65 each bind ATP; that span reads GVGKTE. Residues 137 to 156 form a disordered region; that stretch reads PKPKNDWESTETDSSSNTRQ. ATP-binding residues include Asp-255, Glu-320, and Arg-392.

Belongs to the ClpX chaperone family. HslU subfamily. In terms of assembly, a double ring-shaped homohexamer of HslV is capped on each side by a ring-shaped HslU homohexamer. The assembly of the HslU/HslV complex is dependent on binding of ATP.

It localises to the cytoplasm. ATPase subunit of a proteasome-like degradation complex; this subunit has chaperone activity. The binding of ATP and its subsequent hydrolysis by HslU are essential for unfolding of protein substrates subsequently hydrolyzed by HslV. HslU recognizes the N-terminal part of its protein substrates and unfolds these before they are guided to HslV for hydrolysis. The protein is ATP-dependent protease ATPase subunit HslU of Shewanella baltica (strain OS155 / ATCC BAA-1091).